A 499-amino-acid chain; its full sequence is Glutamate--tRNA ligase (499 aa).

Positions 12–22 (PSPTGHLHIGN) match the 'HIGH' region motif. Positions 259–263 (KLSKR) match the 'KMSKS' region motif. K262 provides a ligand contact to ATP.

It belongs to the class-I aminoacyl-tRNA synthetase family. Glutamate--tRNA ligase type 1 subfamily. In terms of assembly, monomer.

It is found in the cytoplasm. The enzyme catalyses tRNA(Glu) + L-glutamate + ATP = L-glutamyl-tRNA(Glu) + AMP + diphosphate. In terms of biological role, catalyzes the attachment of glutamate to tRNA(Glu) in a two-step reaction: glutamate is first activated by ATP to form Glu-AMP and then transferred to the acceptor end of tRNA(Glu). This is Glutamate--tRNA ligase from Lactobacillus acidophilus (strain ATCC 700396 / NCK56 / N2 / NCFM).